We begin with the raw amino-acid sequence, 338 residues long: GTPase Obg (338 aa).

The Obg domain occupies 1 to 159; it reads MKFVDSASVF…FTLDLELKLM (159 aa). The segment at 123–145 is disordered; sequence GGRGNQHFATSTHQAPRHAEPGQ. The OBG-type G domain occupies 160 to 323; the sequence is ADVGLVGFPN…LKDALWRIIV (164 aa). Residues 166–173, 191–195, 213–216, 280–283, and 304–306 each bind GTP; these read GFPNAGKS, FTTLV, DIPG, TKMD, and SAV. Residues Ser-173 and Thr-193 each contribute to the Mg(2+) site.

This sequence belongs to the TRAFAC class OBG-HflX-like GTPase superfamily. OBG GTPase family. As to quaternary structure, monomer. Mg(2+) is required as a cofactor.

The protein localises to the cytoplasm. Functionally, an essential GTPase which binds GTP, GDP and possibly (p)ppGpp with moderate affinity, with high nucleotide exchange rates and a fairly low GTP hydrolysis rate. Plays a role in control of the cell cycle, stress response, ribosome biogenesis and in those bacteria that undergo differentiation, in morphogenesis control. This is GTPase Obg from Chlorobium chlorochromatii (strain CaD3).